The chain runs to 559 residues: NXPE family member 3 (559 aa).

The first 30 residues, 1-30 (MWTNFFKLRLFCCLLAVLMVVVLVINVTQV), serve as a signal peptide directing secretion. N-linked (GlcNAc...) asparagine glycans are attached at residues Asn237, Asn292, and Asn346.

Belongs to the NXPE family.

It is found in the secreted. The protein is NXPE family member 3 (NXPE3) of Homo sapiens (Human).